The following is a 477-amino-acid chain: Aspartyl/glutamyl-tRNA(Asn/Gln) amidotransferase subunit B (477 aa).

Belongs to the GatB/GatE family. GatB subfamily. In terms of assembly, heterotrimer of A, B and C subunits.

The enzyme catalyses L-glutamyl-tRNA(Gln) + L-glutamine + ATP + H2O = L-glutaminyl-tRNA(Gln) + L-glutamate + ADP + phosphate + H(+). It catalyses the reaction L-aspartyl-tRNA(Asn) + L-glutamine + ATP + H2O = L-asparaginyl-tRNA(Asn) + L-glutamate + ADP + phosphate + 2 H(+). Functionally, allows the formation of correctly charged Asn-tRNA(Asn) or Gln-tRNA(Gln) through the transamidation of misacylated Asp-tRNA(Asn) or Glu-tRNA(Gln) in organisms which lack either or both of asparaginyl-tRNA or glutaminyl-tRNA synthetases. The reaction takes place in the presence of glutamine and ATP through an activated phospho-Asp-tRNA(Asn) or phospho-Glu-tRNA(Gln). This is Aspartyl/glutamyl-tRNA(Asn/Gln) amidotransferase subunit B from Lactococcus lactis subsp. cremoris (strain SK11).